Consider the following 160-residue polypeptide: G-protein-signaling modulator 3 (160 aa).

Residues 1 to 55 (MEAERPQEEEDGEQGPPQDEEGWPPPNSTTRPWRSAPPSPPPPGTRHTALGPRSA) are disordered. A compositionally biased stretch (acidic residues) spans 7 to 22 (QEEEDGEQGPPQDEEG). Residues S35, S39, S56, and S59 each carry the phosphoserine modification. Residues 35 to 44 (SAPPSPPPPG) are compositionally biased toward pro residues. T62 carries the post-translational modification Phosphothreonine. GoLoco domains are found at residues 62-84 (TELL…RATF), 104-126 (REQL…RSEP), and 132-155 (GQEL…RSRP).

As to expression, expressed in heart, placenta, lung and liver.

Its subcellular location is the cytoplasm. Interacts with subunit of G(i) alpha proteins and regulates the activation of G(i) alpha proteins. The sequence is that of G-protein-signaling modulator 3 (GPSM3) from Homo sapiens (Human).